The primary structure comprises 354 residues: MYREWVVVNVFMMLYVQLVQGSSNEHGPVKRSSQSTLERSEQQIRAASSLEELLRITHSEDWKLWRCRLRLKSFTSMDSRSASHRSTRFAATFYDIETLKVIDEEWQRTQCSPRETCVEVASELGKSTNTFFKPPCVNVFRCGGCCNEESLICMNTSTSYISKQLFEISVPLTSVPELVPVKVANHTGCKCLPTAPRHPYSIIRRSIQIPEEDRCSHSKKLCPIDMLWDSNKCKCVLQEENPLAGTEDHSHLQEPALCGPHMMFDEDRCECVCKTPCPKDLIQHPKNCSCFECKESLETCCQKHKLFHPDTCSCEDRCPFHTRPCASGKTACAKHCRFPKEKRAAQGPHSRKNP.

The N-terminal stretch at 1 to 21 (MYREWVVVNVFMMLYVQLVQG) is a signal peptide. Residues 22–88 (SSNEHGPVKR…SRSASHRSTR (67 aa)) constitute a propeptide, or 99 (in a minor form). Disulfide bonds link C111–C153, C142–C189, and C146–C191. N-linked (GlcNAc...) asparagine glycosylation is found at N155 and N185. A propeptide spanning residues 206–354 (SIQIPEEDRC…AQGPHSRKNP (149 aa)) is cleaved from the precursor. A 1; approximate repeat occupies 222-237 (CPIDMLWDSNKCKCVL). Residues 222-318 (CPIDMLWDSN…PDTCSCEDRC (97 aa)) form a 4 X 16 AA repeats of C-X(10)-C-X-C-X(1,3)-C region. Repeat copies occupy residues 258–273 (CGPH…ECVC), 277–293 (CPKD…CFEC), and 301–318 (CQKH…EDRC). N-linked (GlcNAc...) asparagine glycosylation occurs at N287.

Belongs to the PDGF/VEGF growth factor family. Homodimer; non-covalent and antiparallel. In terms of processing, undergoes a complex proteolytic maturation which generates a variety of processed secreted forms with increased activity toward VEGFR-3 and VEGFR-2. VEGF-D first form an antiparallel homodimer linked by disulfide bonds before secretion. The fully processed VEGF-D is composed mostly of two VEGF homology domains (VHDs) bound by non-covalent interactions. As to expression, highly expressed in lung, heart, small intestine and fetal lung, and at lower levels in skeletal muscle, colon, and pancreas.

Its subcellular location is the secreted. In terms of biological role, growth factor active in angiogenesis, lymphangiogenesis and endothelial cell growth, stimulating their proliferation and migration and also has effects on the permeability of blood vessels. May function in the formation of the venous and lymphatic vascular systems during embryogenesis, and also in the maintenance of differentiated lymphatic endothelium in adults. Binds and activates VEGFR-2 (KDR/FLK1) and VEGFR-3 (FLT4) receptors. This is Vascular endothelial growth factor D from Homo sapiens (Human).